Reading from the N-terminus, the 447-residue chain is Glutamyl-tRNA reductase (447 aa).

Substrate is bound by residues 45–48 (TCNR), Ser-111, 116–118 (ETE), and Gln-122. Cys-46 functions as the Nucleophile in the catalytic mechanism. 191-196 (GTGKYA) contacts NADP(+).

The protein belongs to the glutamyl-tRNA reductase family. As to quaternary structure, homodimer.

It catalyses the reaction (S)-4-amino-5-oxopentanoate + tRNA(Glu) + NADP(+) = L-glutamyl-tRNA(Glu) + NADPH + H(+). It participates in porphyrin-containing compound metabolism; protoporphyrin-IX biosynthesis; 5-aminolevulinate from L-glutamyl-tRNA(Glu): step 1/2. Its function is as follows. Catalyzes the NADPH-dependent reduction of glutamyl-tRNA(Glu) to glutamate 1-semialdehyde (GSA). This is Glutamyl-tRNA reductase from Tropheryma whipplei (strain Twist) (Whipple's bacillus).